A 300-amino-acid chain; its full sequence is Ribosomal protein bS6--L-glutamate ligase (300 aa).

The ATP-grasp domain occupies 104–287; the sequence is LQLLARQGID…IAGRMIQWIE (184 aa). ATP is bound by residues Lys-141, 178–179, Asp-187, and 211–213; these read EY and RSN. Asp-248, Glu-260, and Asn-262 together coordinate Mg(2+). Residues Asp-248, Glu-260, and Asn-262 each contribute to the Mn(2+) site.

The protein belongs to the RimK family. It depends on Mg(2+) as a cofactor. Mn(2+) serves as cofactor.

Functionally, an L-glutamate ligase that catalyzes the ATP-dependent post-translational addition of glutamate residues to the C-terminus of ribosomal protein bS6 (RpsF). Is also able to catalyze the synthesis of poly-alpha-glutamate in vitro, via ATP hydrolysis from unprotected glutamate as substrate. The number of glutamate residues added to either RpsF or to poly-alpha-glutamate changes with pH. This chain is Ribosomal protein bS6--L-glutamate ligase, found in Salmonella schwarzengrund (strain CVM19633).